A 29-amino-acid polypeptide reads, in one-letter code: NYTIGNDNVLTEPLSEIKTAGLMYKMGVQ.

It localises to the periplasm. The enzyme catalyses diphosphate + H2O = 2 phosphate + H(+). Functionally, inorganic pyrophosphatase is an essential enzyme for the activation of sulfate by sulfate reducing bacteria. This is a high activity pyrophosphatase. This Nitratidesulfovibrio vulgaris (strain ATCC 29579 / DSM 644 / CCUG 34227 / NCIMB 8303 / VKM B-1760 / Hildenborough) (Desulfovibrio vulgaris) protein is Inorganic pyrophosphatase.